A 191-amino-acid chain; its full sequence is Leucyl/phenylalanyl-tRNA--protein transferase (191 aa).

It belongs to the L/F-transferase family.

The protein localises to the cytoplasm. It catalyses the reaction N-terminal L-lysyl-[protein] + L-leucyl-tRNA(Leu) = N-terminal L-leucyl-L-lysyl-[protein] + tRNA(Leu) + H(+). The catalysed reaction is N-terminal L-arginyl-[protein] + L-leucyl-tRNA(Leu) = N-terminal L-leucyl-L-arginyl-[protein] + tRNA(Leu) + H(+). It carries out the reaction L-phenylalanyl-tRNA(Phe) + an N-terminal L-alpha-aminoacyl-[protein] = an N-terminal L-phenylalanyl-L-alpha-aminoacyl-[protein] + tRNA(Phe). In terms of biological role, functions in the N-end rule pathway of protein degradation where it conjugates Leu, Phe and, less efficiently, Met from aminoacyl-tRNAs to the N-termini of proteins containing an N-terminal arginine or lysine. In Nostoc punctiforme (strain ATCC 29133 / PCC 73102), this protein is Leucyl/phenylalanyl-tRNA--protein transferase.